Consider the following 229-residue polypeptide: Sperm-associated microtubule inner protein 5 (229 aa).

The tract at residues 181–201 (PEFSGPGQTPPSEDPQAPRPC) is disordered.

Microtubule inner protein component of sperm flagellar doublet microtubules. In terms of tissue distribution, expressed in testis (at protein level).

It is found in the cytoplasm. It localises to the cytoskeleton. The protein localises to the flagellum axoneme. Its subcellular location is the nucleus. Functionally, microtubule inner protein (MIP) part of the dynein-decorated doublet microtubules (DMTs) in flagellum axoneme. May serve to reinforce and thus stabilize the microtubule structure in the sperm flagella. This Mus musculus (Mouse) protein is Sperm-associated microtubule inner protein 5 (Spmip5).